A 131-amino-acid polypeptide reads, in one-letter code: NADPH-dependent 7-cyano-7-deazaguanine reductase (131 aa).

The active-site Thioimide intermediate is the cysteine 41. The active-site Proton donor is aspartate 48. Substrate-binding positions include 63 to 65 and 82 to 83; these read VEL and HE.

This sequence belongs to the GTP cyclohydrolase I family. QueF type 1 subfamily.

Its subcellular location is the cytoplasm. It carries out the reaction 7-aminomethyl-7-carbaguanine + 2 NADP(+) = 7-cyano-7-deazaguanine + 2 NADPH + 3 H(+). Its pathway is tRNA modification; tRNA-queuosine biosynthesis. Functionally, catalyzes the NADPH-dependent reduction of 7-cyano-7-deazaguanine (preQ0) to 7-aminomethyl-7-deazaguanine (preQ1). The protein is NADPH-dependent 7-cyano-7-deazaguanine reductase of Nitratiruptor sp. (strain SB155-2).